Here is a 115-residue protein sequence, read N- to C-terminus: U3-lycotoxin-Ls1f (115 aa).

Positions 1–20 (MKFVLLFGVLLVTLFSYSSA) are cleaved as a signal peptide. A propeptide spanning residues 21 to 44 (EMLDDFDQADEDELLSLIEKEEAR) is cleaved from the precursor. 4 disulfide bridges follow: Cys-48–Cys-63, Cys-55–Cys-72, Cys-62–Cys-87, and Cys-74–Cys-85.

This sequence belongs to the neurotoxin 19 (CSTX) family. 01 subfamily. As to expression, expressed by the venom gland.

Its subcellular location is the secreted. This chain is U3-lycotoxin-Ls1f, found in Lycosa singoriensis (Wolf spider).